The following is a 197-amino-acid chain: Histone chaperone asf1b-B (197 aa).

This sequence belongs to the ASF1 family. In terms of assembly, interacts with histone H3 and histone H4.

The protein localises to the nucleus. Functionally, histone chaperone that facilitates histone deposition and histone exchange and removal during nucleosome assembly and disassembly. The polypeptide is Histone chaperone asf1b-B (asf1bb) (Danio rerio (Zebrafish)).